A 457-amino-acid polypeptide reads, in one-letter code: Phosphoglucosamine mutase (457 aa).

The Phosphoserine intermediate role is filled by Ser103. Positions 103, 245, 247, and 249 each coordinate Mg(2+). Ser103 carries the post-translational modification Phosphoserine.

This sequence belongs to the phosphohexose mutase family. Mg(2+) is required as a cofactor. In terms of processing, activated by phosphorylation.

It carries out the reaction alpha-D-glucosamine 1-phosphate = D-glucosamine 6-phosphate. Catalyzes the conversion of glucosamine-6-phosphate to glucosamine-1-phosphate. The chain is Phosphoglucosamine mutase from Syntrophotalea carbinolica (strain DSM 2380 / NBRC 103641 / GraBd1) (Pelobacter carbinolicus).